A 155-amino-acid chain; its full sequence is Transcriptional repressor NrdR (155 aa).

The segment at 3-34 (CPFCGNIDTQVKDSRPAEDHVSIRRRRFCPAC) is a zinc-finger region. One can recognise an ATP-cone domain in the interval 49-139 (LVVIKSTGKR…VYKNFQAADD (91 aa)).

This sequence belongs to the NrdR family. Zn(2+) serves as cofactor.

Functionally, negatively regulates transcription of bacterial ribonucleotide reductase nrd genes and operons by binding to NrdR-boxes. In Roseobacter denitrificans (strain ATCC 33942 / OCh 114) (Erythrobacter sp. (strain OCh 114)), this protein is Transcriptional repressor NrdR.